A 434-amino-acid chain; its full sequence is Histidine--tRNA ligase (434 aa).

It belongs to the class-II aminoacyl-tRNA synthetase family. Homodimer.

It localises to the cytoplasm. The enzyme catalyses tRNA(His) + L-histidine + ATP = L-histidyl-tRNA(His) + AMP + diphosphate + H(+). In Latilactobacillus sakei subsp. sakei (strain 23K) (Lactobacillus sakei subsp. sakei), this protein is Histidine--tRNA ligase.